The sequence spans 529 residues: Phosphoenolpyruvate carboxykinase (ATP) (529 aa).

Arg-60, Tyr-195, and Lys-201 together coordinate substrate. ATP-binding positions include Lys-201, His-220, and 236–244 (GLSGTGKTT). Lys-201 and His-220 together coordinate Mn(2+). Asp-257 contributes to the Mn(2+) binding site. The ATP site is built by Glu-285, Arg-323, and Ser-448. Arg-323 provides a ligand contact to substrate.

The protein belongs to the phosphoenolpyruvate carboxykinase (ATP) family. Mn(2+) serves as cofactor.

It localises to the cytoplasm. It catalyses the reaction oxaloacetate + ATP = phosphoenolpyruvate + ADP + CO2. It functions in the pathway carbohydrate biosynthesis; gluconeogenesis. Involved in the gluconeogenesis. Catalyzes the conversion of oxaloacetate (OAA) to phosphoenolpyruvate (PEP) through direct phosphoryl transfer between the nucleoside triphosphate and OAA. The sequence is that of Phosphoenolpyruvate carboxykinase (ATP) from Geobacter sp. (strain M21).